Here is a 292-residue protein sequence, read N- to C-terminus: Small ribosomal subunit protein uS3 (292 aa).

The 72-residue stretch at 39–110 (IRLEIMKFLK…KISIKIKEVK (72 aa)) folds into the KH type-2 domain. The interval 247-268 (KANERQSRAALNKKDGLSKDET) is disordered.

It belongs to the universal ribosomal protein uS3 family. In terms of assembly, part of the 30S ribosomal subunit. Forms a tight complex with proteins S10 and S14.

Functionally, binds the lower part of the 30S subunit head. Binds mRNA in the 70S ribosome, positioning it for translation. The polypeptide is Small ribosomal subunit protein uS3 (Borrelia garinii subsp. bavariensis (strain ATCC BAA-2496 / DSM 23469 / PBi) (Borreliella bavariensis)).